Here is a 208-residue protein sequence, read N- to C-terminus: Uracil phosphoribosyltransferase (208 aa).

5-phospho-alpha-D-ribose 1-diphosphate contacts are provided by residues arginine 78, arginine 103, and 130–138 (DPMLATGVS). Uracil contacts are provided by residues isoleucine 193 and 198–200 (GDA). Aspartate 199 provides a ligand contact to 5-phospho-alpha-D-ribose 1-diphosphate.

Belongs to the UPRTase family. Requires Mg(2+) as cofactor.

It carries out the reaction UMP + diphosphate = 5-phospho-alpha-D-ribose 1-diphosphate + uracil. It participates in pyrimidine metabolism; UMP biosynthesis via salvage pathway; UMP from uracil: step 1/1. Its activity is regulated as follows. Allosterically activated by GTP. Its function is as follows. Catalyzes the conversion of uracil and 5-phospho-alpha-D-ribose 1-diphosphate (PRPP) to UMP and diphosphate. This chain is Uracil phosphoribosyltransferase, found in Thermosipho melanesiensis (strain DSM 12029 / CIP 104789 / BI429).